The sequence spans 513 residues: Bifunctional purine biosynthesis protein PurH (513 aa).

The MGS-like domain occupies 1-147 (MIQIKRALVS…KNHKNVVVLT (147 aa)).

The protein belongs to the PurH family.

The catalysed reaction is (6R)-10-formyltetrahydrofolate + 5-amino-1-(5-phospho-beta-D-ribosyl)imidazole-4-carboxamide = 5-formamido-1-(5-phospho-D-ribosyl)imidazole-4-carboxamide + (6S)-5,6,7,8-tetrahydrofolate. It carries out the reaction IMP + H2O = 5-formamido-1-(5-phospho-D-ribosyl)imidazole-4-carboxamide. It participates in purine metabolism; IMP biosynthesis via de novo pathway; 5-formamido-1-(5-phospho-D-ribosyl)imidazole-4-carboxamide from 5-amino-1-(5-phospho-D-ribosyl)imidazole-4-carboxamide (10-formyl THF route): step 1/1. The protein operates within purine metabolism; IMP biosynthesis via de novo pathway; IMP from 5-formamido-1-(5-phospho-D-ribosyl)imidazole-4-carboxamide: step 1/1. The chain is Bifunctional purine biosynthesis protein PurH from Leptospira biflexa serovar Patoc (strain Patoc 1 / Ames).